The primary structure comprises 228 residues: Cytidylate kinase (228 aa).

7–15 (GPVATGKST) lines the ATP pocket.

Belongs to the cytidylate kinase family. Type 1 subfamily.

It is found in the cytoplasm. It catalyses the reaction CMP + ATP = CDP + ADP. It carries out the reaction dCMP + ATP = dCDP + ADP. This chain is Cytidylate kinase, found in Protochlamydia amoebophila (strain UWE25).